The following is a 446-amino-acid chain: GTPase Der (446 aa).

EngA-type G domains are found at residues 2-166 (TVVA…PEAP) and 179-354 (IRVS…RQYN). GTP is bound by residues 8 to 15 (GRPNVGKS), 55 to 59 (DTAGF), 118 to 121 (NKID), 185 to 192 (GRPNVGKS), 232 to 236 (DTAGI), and 297 to 300 (NKWD). Residues 355-440 (QRVTTGIVNR…PIRLIFRPRQ (86 aa)) form the KH-like domain.

The protein belongs to the TRAFAC class TrmE-Era-EngA-EngB-Septin-like GTPase superfamily. EngA (Der) GTPase family. As to quaternary structure, associates with the 50S ribosomal subunit.

Functionally, GTPase that plays an essential role in the late steps of ribosome biogenesis. This chain is GTPase Der, found in Syntrophobacter fumaroxidans (strain DSM 10017 / MPOB).